The sequence spans 113 residues: UPF0482 protein YnfB (113 aa).

An N-terminal signal peptide occupies residues 1–28 (MNNTLSKRLCLTAMLTLAAVVYTTSAFA).

This sequence belongs to the UPF0482 family.

The polypeptide is UPF0482 protein YnfB (Salmonella agona (strain SL483)).